The chain runs to 430 residues: Adenylosuccinate synthetase (430 aa).

Residues 13–19 (GDEGKGK) and 41–43 (GHT) each bind GTP. Aspartate 14 serves as the catalytic Proton acceptor. Residues aspartate 14 and glycine 41 each contribute to the Mg(2+) site. Residues 14 to 17 (DEGK), 39 to 42 (NAGH), threonine 130, arginine 144, glutamine 225, threonine 240, and arginine 304 each bind IMP. Residue histidine 42 is the Proton donor of the active site. 300-306 (ASTGRPR) contributes to the substrate binding site. GTP contacts are provided by residues arginine 306, 332-334 (KLD), and 414-416 (STG).

The protein belongs to the adenylosuccinate synthetase family. In terms of assembly, homodimer. The cofactor is Mg(2+).

It localises to the cytoplasm. The catalysed reaction is IMP + L-aspartate + GTP = N(6)-(1,2-dicarboxyethyl)-AMP + GDP + phosphate + 2 H(+). It participates in purine metabolism; AMP biosynthesis via de novo pathway; AMP from IMP: step 1/2. Functionally, plays an important role in the de novo pathway of purine nucleotide biosynthesis. Catalyzes the first committed step in the biosynthesis of AMP from IMP. The chain is Adenylosuccinate synthetase from Xylella fastidiosa (strain M23).